Reading from the N-terminus, the 311-residue chain is Methionyl-tRNA formyltransferase (311 aa).

(6S)-5,6,7,8-tetrahydrofolate is bound at residue 109 to 112 (SLLP).

The protein belongs to the Fmt family.

The enzyme catalyses L-methionyl-tRNA(fMet) + (6R)-10-formyltetrahydrofolate = N-formyl-L-methionyl-tRNA(fMet) + (6S)-5,6,7,8-tetrahydrofolate + H(+). In terms of biological role, attaches a formyl group to the free amino group of methionyl-tRNA(fMet). The formyl group appears to play a dual role in the initiator identity of N-formylmethionyl-tRNA by promoting its recognition by IF2 and preventing the misappropriation of this tRNA by the elongation apparatus. The sequence is that of Methionyl-tRNA formyltransferase from Marinobacter nauticus (strain ATCC 700491 / DSM 11845 / VT8) (Marinobacter aquaeolei).